The following is an 870-amino-acid chain: NEDD4-like E3 ubiquitin-protein ligase WWP2 (870 aa).

The C2 domain maps to 1–117 (MASASSSRAG…KNNGGKMENT (117 aa)). Residues 150–300 (SVPNGSAVTD…QLPAAAQAPD (151 aa)) form a disordered region. Over residues 152 to 171 (PNGSAVTDGSQPPSRESSGT) the composition is skewed to polar residues. Residues 198–208 (GGSARTATAAS) show a composition bias toward low complexity. Serine 211 is modified (phosphoserine). 2 stretches are compositionally biased toward polar residues: residues 222–235 (VKNS…NGTV) and 262–289 (SVSS…TSGT). Residues 290-300 (QQLPAAAQAPD) show a composition bias toward low complexity. 4 WW domains span residues 300-333 (DALP…RPLP), 330-363 (RPLP…RPTA), 405-437 (GPLP…DPRT), and 444-477 (PALP…DPRP). Residues 536–870 (KPYDLRRRLY…IEETEGFGQE (335 aa)) form the HECT domain. Residue cysteine 838 is the Glycyl thioester intermediate of the active site.

As to quaternary structure, interacts with SCNN1A, SCNN1B, SCNN1G, WBP1, WBP2 and ATN1. Interacts with ERBB4, NDFIP1 and NDFIP2. Interacts with ARRDC4. Interacts with POU5F1, RBP1, EGR2 and SLC11A2. Interacts (via WW domains) with ARRDC1 (via PPxY motifs); ubiquitinates ARRDC1. Interacts (via WW domains) with ARRDC2 and ARRDC3. Post-translationally, autoubiquitinated. Ubiquitinated by the SCF(FBXL15) complex, leading to its degradation by the proteasome.

It is found in the nucleus. It catalyses the reaction S-ubiquitinyl-[E2 ubiquitin-conjugating enzyme]-L-cysteine + [acceptor protein]-L-lysine = [E2 ubiquitin-conjugating enzyme]-L-cysteine + N(6)-ubiquitinyl-[acceptor protein]-L-lysine.. Its pathway is protein modification; protein ubiquitination. Activated by NDFIP1- and NDFIP2-binding. In terms of biological role, E3 ubiquitin-protein ligase which accepts ubiquitin from an E2 ubiquitin-conjugating enzyme in the form of a thioester and then directly transfers the ubiquitin to targeted substrates. Polyubiquitinates POU5F1 by 'Lys-63'-linked conjugation and promotes it to proteasomal degradation; regulates POU5F1 protein level during differentiation of embryonal carcinoma cells (ECCs) but not in undifferentiated ECCs and embryonic stem cells (ESCs). Ubiquitinates EGR2 and promotes it to proteasomal degradation; in T-cells the ubiquitination inhibits activation-induced cell death. Ubiquitinates SLC11A2; the ubiquitination is enhanced by presence of NDFIP1 and NDFIP2. Ubiquitinates RPB1 and promotes it to proteasomal degradation. This is NEDD4-like E3 ubiquitin-protein ligase WWP2 (Wwp2) from Mus musculus (Mouse).